The chain runs to 156 residues: Small ribosomal subunit protein uS7 (156 aa).

This sequence belongs to the universal ribosomal protein uS7 family. In terms of assembly, part of the 30S ribosomal subunit. Contacts proteins S9 and S11.

One of the primary rRNA binding proteins, it binds directly to 16S rRNA where it nucleates assembly of the head domain of the 30S subunit. Is located at the subunit interface close to the decoding center, probably blocks exit of the E-site tRNA. This Pseudomonas syringae pv. syringae (strain B728a) protein is Small ribosomal subunit protein uS7.